The following is a 642-amino-acid chain: Hemagglutinin-esterase-fusion glycoprotein (642 aa).

Residue alanine 1 is a signal peptide. Residues glutamate 2–tyrosine 27 are fusion domain-1. At glutamate 2–serine 617 the chain is on the extracellular side. 7 disulfide bridges follow: cysteine 7/cysteine 570, cysteine 107/cysteine 152, cysteine 127/cysteine 175, cysteine 197/cysteine 239, cysteine 216/cysteine 303, cysteine 224/cysteine 276, and cysteine 333/cysteine 339. 2 N-linked (GlcNAc...) asparagine; by host glycosylation sites follow: asparagine 13 and asparagine 48. Positions alanine 28–asparagine 138 are esterase domain-1. The active-site Nucleophile is the serine 58. Asparagine 131 carries N-linked (GlcNAc...) asparagine; by host glycosylation. The segment at asparagine 138–methionine 297 is N-acetyl-9-O-acetylneuraminic acid binding. The tract at residues proline 298 to alanine 352 is esterase domain-2. Catalysis depends on charge relay system residues aspartate 353 and histidine 356. Residues aspartate 353–isoleucine 638 form a fusion domain-2 region. Asparagine 382 is a glycosylation site (N-linked (GlcNAc...) asparagine; by host). Residues leucine 618–isoleucine 638 traverse the membrane as a helical segment. The Cytoplasmic segment spans residues cysteine 639 to lysine 642.

This sequence belongs to the influenza type C/coronaviruses hemagglutinin-esterase family. As to quaternary structure, homotrimer of disulfide-linked HEF1-HEF2. In natural infection, inactive HEF is matured into HEF1 and HEF2 outside the cell by one or more trypsin-like, arginine-specific endoprotease.

The protein resides in the virion membrane. It is found in the host cell membrane. The enzyme catalyses N-acetyl-9-O-acetylneuraminate + H2O = N-acetylneuraminate + acetate + H(+). It carries out the reaction N-acetyl-4-O-acetylneuraminate + H2O = N-acetylneuraminate + acetate + H(+). In terms of biological role, binds to the N-acetyl-9-O-acetylneuraminic acid residues on the cell surface, bringing about the attachment of the virus particle to the cell. Plays a major role in the determination of host range restriction and virulence. Class I viral fusion protein. Responsible for penetration of the virus into the cell cytoplasm by mediating the fusion of the membrane of the endocytosed virus particle with the endosomal membrane. Low pH in endosomes induce an irreversible conformational change in HEF2, releasing the fusion hydrophobic peptide. Several trimers are required to form a competent fusion pore. Displays a receptor-destroying activity which is a neuraminidate-O-acetyl esterase. This activity cleaves off any receptor on the cell surface, which would otherwise prevent virions release. These cleavages prevent self-aggregation and ensure the efficient spread of the progeny virus from cell to cell. This Influenza C virus (strain C/England/892/1983) protein is Hemagglutinin-esterase-fusion glycoprotein (HE).